Here is an 860-residue protein sequence, read N- to C-terminus: DNA mismatch repair protein MutS (860 aa).

620–627 contributes to the ATP binding site; it reads GPNMGGKS.

Belongs to the DNA mismatch repair MutS family.

Its function is as follows. This protein is involved in the repair of mismatches in DNA. It is possible that it carries out the mismatch recognition step. This protein has a weak ATPase activity. This Dechloromonas aromatica (strain RCB) protein is DNA mismatch repair protein MutS.